The following is a 328-amino-acid chain: dTDP-4-dehydrorhamnose 3,5-epimerase (328 aa).

Substrate contacts are provided by residues Arg-23, Glu-28, 46–48, and Arg-58; that span reads QEN. Catalysis depends on His-61, which acts as the Proton acceptor. Positions 70 and 117 each coordinate substrate. The Proton donor role is filled by Tyr-130. Residues Glu-141 and Lys-166 each coordinate substrate.

Belongs to the dTDP-4-dehydrorhamnose 3,5-epimerase family. Homodimer.

The enzyme catalyses dTDP-4-dehydro-6-deoxy-alpha-D-glucose = dTDP-4-dehydro-beta-L-rhamnose. It functions in the pathway carbohydrate biosynthesis; dTDP-L-rhamnose biosynthesis. It participates in bacterial outer membrane biogenesis; LPS O-antigen biosynthesis. Its function is as follows. Catalyzes the epimerization of the C3' and C5'positions of dTDP-6-deoxy-D-xylo-4-hexulose, forming dTDP-6-deoxy-L-lyxo-4-hexulose. In Neisseria gonorrhoeae, this protein is dTDP-4-dehydrorhamnose 3,5-epimerase (rfbC).